Consider the following 263-residue polypeptide: Diphthine synthase (263 aa).

S-adenosyl-L-methionine contacts are provided by residues L11, D89, A92, 117-118 (SV), L166, and L208.

It belongs to the diphthine synthase family. In terms of assembly, homodimer.

The enzyme catalyses 2-[(3S)-amino-3-carboxypropyl]-L-histidyl-[translation elongation factor 2] + 3 S-adenosyl-L-methionine = diphthine-[translation elongation factor 2] + 3 S-adenosyl-L-homocysteine + 3 H(+). Its pathway is protein modification; peptidyl-diphthamide biosynthesis. In terms of biological role, S-adenosyl-L-methionine-dependent methyltransferase that catalyzes the trimethylation of the amino group of the modified target histidine residue in translation elongation factor 2 (EF-2), to form an intermediate called diphthine. The three successive methylation reactions represent the second step of diphthamide biosynthesis. This chain is Diphthine synthase, found in Methanopyrus kandleri (strain AV19 / DSM 6324 / JCM 9639 / NBRC 100938).